A 176-amino-acid polypeptide reads, in one-letter code: Crossover junction endodeoxyribonuclease RuvC (176 aa).

Active-site residues include Asp-7, Glu-68, and Asp-141. Asp-7, Glu-68, and Asp-141 together coordinate Mg(2+).

This sequence belongs to the RuvC family. In terms of assembly, homodimer which binds Holliday junction (HJ) DNA. The HJ becomes 2-fold symmetrical on binding to RuvC with unstacked arms; it has a different conformation from HJ DNA in complex with RuvA. In the full resolvosome a probable DNA-RuvA(4)-RuvB(12)-RuvC(2) complex forms which resolves the HJ. The cofactor is Mg(2+).

The protein localises to the cytoplasm. The enzyme catalyses Endonucleolytic cleavage at a junction such as a reciprocal single-stranded crossover between two homologous DNA duplexes (Holliday junction).. The RuvA-RuvB-RuvC complex processes Holliday junction (HJ) DNA during genetic recombination and DNA repair. Endonuclease that resolves HJ intermediates. Cleaves cruciform DNA by making single-stranded nicks across the HJ at symmetrical positions within the homologous arms, yielding a 5'-phosphate and a 3'-hydroxyl group; requires a central core of homology in the junction. The consensus cleavage sequence is 5'-(A/T)TT(C/G)-3'. Cleavage occurs on the 3'-side of the TT dinucleotide at the point of strand exchange. HJ branch migration catalyzed by RuvA-RuvB allows RuvC to scan DNA until it finds its consensus sequence, where it cleaves and resolves the cruciform DNA. The chain is Crossover junction endodeoxyribonuclease RuvC from Streptomyces avermitilis (strain ATCC 31267 / DSM 46492 / JCM 5070 / NBRC 14893 / NCIMB 12804 / NRRL 8165 / MA-4680).